The primary structure comprises 69 residues: Putative membrane protein insertion efficiency factor (69 aa).

Belongs to the UPF0161 family.

The protein resides in the cell inner membrane. Functionally, could be involved in insertion of integral membrane proteins into the membrane. This Geobacter metallireducens (strain ATCC 53774 / DSM 7210 / GS-15) protein is Putative membrane protein insertion efficiency factor.